The primary structure comprises 303 residues: UDP-N-acetylenolpyruvoylglucosamine reductase (303 aa).

Residues 32–212 (IGGKADLFLN…EQETKEYLAK (181 aa)) enclose the FAD-binding PCMH-type domain. Arginine 176 is a catalytic residue. Serine 226 serves as the catalytic Proton donor. Glutamate 296 is an active-site residue.

The protein belongs to the MurB family. It depends on FAD as a cofactor.

It is found in the cytoplasm. The enzyme catalyses UDP-N-acetyl-alpha-D-muramate + NADP(+) = UDP-N-acetyl-3-O-(1-carboxyvinyl)-alpha-D-glucosamine + NADPH + H(+). The protein operates within cell wall biogenesis; peptidoglycan biosynthesis. In terms of biological role, cell wall formation. This chain is UDP-N-acetylenolpyruvoylglucosamine reductase, found in Desulforamulus reducens (strain ATCC BAA-1160 / DSM 100696 / MI-1) (Desulfotomaculum reducens).